A 392-amino-acid polypeptide reads, in one-letter code: Queuine tRNA-ribosyltransferase (392 aa).

D93 (proton acceptor) is an active-site residue. Substrate contacts are provided by residues 93-97, D147, Q189, and G216; that span reads DSGGY. The segment at 247–253 is RNA binding; that stretch reads GVGAPED. Residue D266 is the Nucleophile of the active site. The RNA binding; important for wobble base 34 recognition stretch occupies residues 271–275; that stretch reads TRVAR. 4 residues coordinate Zn(2+): C304, C306, C309, and H335.

This sequence belongs to the queuine tRNA-ribosyltransferase family. Homodimer. Within each dimer, one monomer is responsible for RNA recognition and catalysis, while the other monomer binds to the replacement base PreQ1. Zn(2+) serves as cofactor.

It carries out the reaction 7-aminomethyl-7-carbaguanine + guanosine(34) in tRNA = 7-aminomethyl-7-carbaguanosine(34) in tRNA + guanine. It participates in tRNA modification; tRNA-queuosine biosynthesis. Functionally, catalyzes the base-exchange of a guanine (G) residue with the queuine precursor 7-aminomethyl-7-deazaguanine (PreQ1) at position 34 (anticodon wobble position) in tRNAs with GU(N) anticodons (tRNA-Asp, -Asn, -His and -Tyr). Catalysis occurs through a double-displacement mechanism. The nucleophile active site attacks the C1' of nucleotide 34 to detach the guanine base from the RNA, forming a covalent enzyme-RNA intermediate. The proton acceptor active site deprotonates the incoming PreQ1, allowing a nucleophilic attack on the C1' of the ribose to form the product. After dissociation, two additional enzymatic reactions on the tRNA convert PreQ1 to queuine (Q), resulting in the hypermodified nucleoside queuosine (7-(((4,5-cis-dihydroxy-2-cyclopenten-1-yl)amino)methyl)-7-deazaguanosine). The protein is Queuine tRNA-ribosyltransferase of Dehalococcoides mccartyi (strain CBDB1).